We begin with the raw amino-acid sequence, 402 residues long: Opaque-phase-specific protein OP4 (402 aa).

Residues 1 to 20 (MKFSQATILAIFASSALVSA) form the signal peptide. N140 and N293 each carry an N-linked (GlcNAc...) asparagine glycan. The segment at 302-322 (NNAGSSSKPTGTTTASTATAA) is disordered. Residues 304-322 (AGSSSKPTGTTTASTATAA) are compositionally biased toward low complexity.

In Candida albicans (strain WO-1) (Yeast), this protein is Opaque-phase-specific protein OP4 (OPS4).